A 491-amino-acid polypeptide reads, in one-letter code: Lysine--tRNA ligase 1 (491 aa).

2 residues coordinate Mg(2+): E400 and E407.

It belongs to the class-II aminoacyl-tRNA synthetase family. Homodimer. Mg(2+) is required as a cofactor.

It localises to the cytoplasm. It carries out the reaction tRNA(Lys) + L-lysine + ATP = L-lysyl-tRNA(Lys) + AMP + diphosphate. The polypeptide is Lysine--tRNA ligase 1 (Mycoplasmopsis pulmonis (strain UAB CTIP) (Mycoplasma pulmonis)).